Consider the following 244-residue polypeptide: Uridylate kinase (244 aa).

Residue 12 to 15 participates in ATP binding; sequence KLSG. Positions 20–25 are involved in allosteric activation by GTP; that stretch reads GERGVG. UMP is bound at residue glycine 54. Glycine 55 and arginine 59 together coordinate ATP. Residues aspartate 74 and 135 to 142 contribute to the UMP site; that span reads IGSPYFST. Residues asparagine 163, tyrosine 169, and aspartate 172 each coordinate ATP.

This sequence belongs to the UMP kinase family. As to quaternary structure, homohexamer.

It is found in the cytoplasm. The catalysed reaction is UMP + ATP = UDP + ADP. Its pathway is pyrimidine metabolism; CTP biosynthesis via de novo pathway; UDP from UMP (UMPK route): step 1/1. Its activity is regulated as follows. Allosterically activated by GTP. Inhibited by UTP. Functionally, catalyzes the reversible phosphorylation of UMP to UDP. The chain is Uridylate kinase from Streptococcus suis (strain 98HAH33).